Here is a 164-residue protein sequence, read N- to C-terminus: NADH-quinone oxidoreductase subunit C (164 aa).

It belongs to the complex I 30 kDa subunit family. As to quaternary structure, NDH-1 is composed of 14 different subunits. Subunits NuoB, C, D, E, F, and G constitute the peripheral sector of the complex.

The protein localises to the cell inner membrane. The enzyme catalyses a quinone + NADH + 5 H(+)(in) = a quinol + NAD(+) + 4 H(+)(out). In terms of biological role, NDH-1 shuttles electrons from NADH, via FMN and iron-sulfur (Fe-S) centers, to quinones in the respiratory chain. The immediate electron acceptor for the enzyme in this species is believed to be ubiquinone. Couples the redox reaction to proton translocation (for every two electrons transferred, four hydrogen ions are translocated across the cytoplasmic membrane), and thus conserves the redox energy in a proton gradient. The protein is NADH-quinone oxidoreductase subunit C of Geotalea uraniireducens (strain Rf4) (Geobacter uraniireducens).